We begin with the raw amino-acid sequence, 434 residues long: UDP-glucuronate 4-epimerase 2 (434 aa).

2 consecutive transmembrane segments (helical) span residues 32 to 52 and 91 to 111; these read SVAK…IFFY and GVSV…SAAL. 93 to 124 is a binding site for NAD(+); the sequence is SVLVTGAAGFVGTHVSAALKRRGDGVLGLDNF. Catalysis depends on Y243, which acts as the Proton acceptor.

Belongs to the NAD(P)-dependent epimerase/dehydratase family. As to quaternary structure, homodimer. As to expression, in roots, leaves, siliques, flowers, pollen and stems.

It is found in the golgi apparatus. The protein resides in the golgi stack membrane. The catalysed reaction is UDP-alpha-D-glucuronate = UDP-alpha-D-galacturonate. In terms of biological role, involved in the synthesis of the negatively charged monosaccharide that forms the backbone of pectic cell wall components. In Arabidopsis thaliana (Mouse-ear cress), this protein is UDP-glucuronate 4-epimerase 2 (GAE2).